Here is a 291-residue protein sequence, read N- to C-terminus: N-acetylmannosamine kinase (291 aa).

Residues 5–12 (AIDIGGTK) and 132–139 (GVGGGVVS) each bind ATP. Zn(2+)-binding residues include His156, Cys166, Cys168, and Cys173.

It belongs to the ROK (NagC/XylR) family. NanK subfamily. As to quaternary structure, homodimer.

It carries out the reaction an N-acyl-D-mannosamine + ATP = an N-acyl-D-mannosamine 6-phosphate + ADP + H(+). The protein operates within amino-sugar metabolism; N-acetylneuraminate degradation; D-fructose 6-phosphate from N-acetylneuraminate: step 2/5. Catalyzes the phosphorylation of N-acetylmannosamine (ManNAc) to ManNAc-6-P. The protein is N-acetylmannosamine kinase of Escherichia fergusonii (strain ATCC 35469 / DSM 13698 / CCUG 18766 / IAM 14443 / JCM 21226 / LMG 7866 / NBRC 102419 / NCTC 12128 / CDC 0568-73).